Consider the following 32-residue polypeptide: Cytochrome b6-f complex subunit 7 (32 aa).

Residues 9 to 27 form a helical membrane-spanning segment; it reads AVVFWVLIPVGLAGGALLL.

The protein belongs to the PetM family. As to quaternary structure, the 4 large subunits of the cytochrome b6-f complex are cytochrome b6, subunit IV (17 kDa polypeptide, PetD), cytochrome f and the Rieske protein, while the 4 small subunits are PetG, PetL, PetM and PetN. The complex functions as a dimer.

The protein localises to the cellular thylakoid membrane. Its function is as follows. Component of the cytochrome b6-f complex, which mediates electron transfer between photosystem II (PSII) and photosystem I (PSI), cyclic electron flow around PSI, and state transitions. The chain is Cytochrome b6-f complex subunit 7 from Synechococcus sp. (strain CC9311).